Consider the following 375-residue polypeptide: Response regulator aspartate phosphatase E (375 aa).

A coiled-coil region spans residues 24 to 95; it reads NVTDAEMLKA…HKKKLDNMRA (72 aa). TPR repeat units lie at residues 96-129, 177-210, 219-252, 258-291, 297-330, and 333-366; these read YYYN…IPTI, IQCH…AELL, ATAF…YRKI, PQAY…AVDF, MNLF…KGYP, and EELA…QKQI.

This sequence belongs to the Rap family.

It localises to the cytoplasm. Its activity is regulated as follows. Phosphatase activity is inhibited by the phosphatase regulator PhrE. Functionally, involved in the regulation of sporulation. Acts as a phosphatase that specifically dephosphorylates the sporulation initiation phosphotransferase Spo0F and inhibits its activity. Probably plays a dispensable role in the overall context of sporulation initiation. This is Response regulator aspartate phosphatase E (rapE) from Bacillus subtilis (strain 168).